The primary structure comprises 123 residues: Large ribosomal subunit protein uL14c (123 aa).

The protein belongs to the universal ribosomal protein uL14 family. Part of the 50S ribosomal subunit. Interacts with IOJAP.

Its subcellular location is the plastid. It localises to the chloroplast. Binds to 23S rRNA. The chain is Large ribosomal subunit protein uL14c from Zea mays (Maize).